Consider the following 884-residue polypeptide: MLTVNDIRQKFLGYFKNYNHQEIPSSSLIPRDDPSLLFTNAGMVQFKKVFTGQETRNYLRATTAQKCLRVGGKHNDLENVGRTARHHTFFEMLGNFSFGDYFKKEAIQFAWAFITEELNLSKEFLYITIYKDDDDAYDIWVNTIGVEPSRIYRMGEKDNFWSMGDTGPCGPCSEIHFDQGETFCCGDNCGIGSCDCDRFLEIWNLVFMQYEQLPSGERVILPKPSIDTGMGLERIVAICQQKSSNYDTDLFQPIIQYMASIAGVHYKKHEETDIALRVIADHSRAIAFMIADGILPSNEGRGYVLRRLIRRAFRFGKQIGMNQPFLYKTVNKVVELMGDIYTELYSRSEFMSRVVFDEEERFSITLDKGLILLEAELNALKEKNTKELPGDIAFKLYDTYGFPLDIINDIASKKHFAVDEANFQHLMQEQKERARSQWKGSGEKRIEACFQTLLEDGMQSEFIGYENLSGTGRIVALLDIDGLPIEELPTKSSGYVITDMTPFYGTSGGQTGDIGILSTITGKTQVVDTLKPATNLIVHVVTVTSGTILLDQEALLVVSESERLDTARNHTCTHILQSVLQKILGDHVRQAGSLVSPTRLRFDFTHIAPLTEEEIHAIELQVNTIIMANLPLRVEFMDQQSALEKGAMALFEEKYGNIVRVVTIGSENQTASIELCGGTHLTSTGQAGCFIIVSETGIAAGVRRIEAITGRNTLAYIKEYQKELSTTAAILKTKPEKVVEKVTSILSENKNLQKTVDTLESSSLSNQGKHLLDNLTRINNIDVLTANLKNFSLKALRDIMDDIRSKLSSGIVCLASTEGTKVHLLLYVSKDLHHNFTASELIKKIVVPIHGAGGGRPDQAQAGGTNPSGLSETFELLKNILEDQ.

Zn(2+)-binding residues include H570, H574, C676, and H680.

Belongs to the class-II aminoacyl-tRNA synthetase family. Requires Zn(2+) as cofactor.

The protein localises to the cytoplasm. It catalyses the reaction tRNA(Ala) + L-alanine + ATP = L-alanyl-tRNA(Ala) + AMP + diphosphate. In terms of biological role, catalyzes the attachment of alanine to tRNA(Ala) in a two-step reaction: alanine is first activated by ATP to form Ala-AMP and then transferred to the acceptor end of tRNA(Ala). Also edits incorrectly charged Ser-tRNA(Ala) and Gly-tRNA(Ala) via its editing domain. In Lawsonia intracellularis (strain PHE/MN1-00), this protein is Alanine--tRNA ligase.